Consider the following 532-residue polypeptide: E3 ubiquitin-protein ligase MGRN1 (532 aa).

Residue glycine 2 is the site of N-myristoyl glycine attachment. The segment at 277-316 adopts an RING-type zinc-finger fold; that stretch reads ECVVCLSDLRDTLILPCRHLCLCTSCADTLRYQANNCPIC. A Required for TSG101-binding motif is present at residues 384–387; that stretch reads PSAP. Tyrosine 389 carries the phosphotyrosine modification. Residues 419–518 form a disordered region; sequence LQKGKTQSKS…QPVPPADIYL (100 aa). A compositionally biased stretch (polar residues) spans 422-435; that stretch reads GKTQSKSPDSTLRS. 4 positions are modified to phosphoserine: serine 428, serine 449, serine 452, and serine 501. The span at 442 to 453 shows a compositional bias: acidic residues; sequence EEDEEKLSEDSD.

As to quaternary structure, interacts with MC1R and MC4R. Interacts with TSG101. Interacts with mislocalized cytosolically exposed PRNP; this interaction alters MGRN1 subcellular location and causes lysosomal enlargement. Post-translationally, autoubiquitinated in vitro. As to expression, widely expressed, with highest levels in brain, heart, kidney and liver. In the CNS, especially prominent in the Purkinje cells of the cerebellum. In the skin, expressed in the basal layer of the epidermis and hair follicles, primarily in the outer root sheath. Isoforms 1, 3, 4 and 5 are equally expressed in the liver. Isoforms 1, 3 and 4 are most abundant in brain, kidney and heart, respectively.

Its subcellular location is the early endosome. It is found in the cytoplasm. The protein resides in the cell membrane. The protein localises to the nucleus. It carries out the reaction S-ubiquitinyl-[E2 ubiquitin-conjugating enzyme]-L-cysteine + [acceptor protein]-L-lysine = [E2 ubiquitin-conjugating enzyme]-L-cysteine + N(6)-ubiquitinyl-[acceptor protein]-L-lysine.. Its pathway is protein modification; protein ubiquitination. In terms of biological role, E3 ubiquitin-protein ligase. Mediates TSG101 monoubiquitination at multiple sites. Plays a role in the regulation of endosome-to-lysosome trafficking. Impairs MC1R- and MC4R-signaling by competing with GNAS-binding to MCRs and inhibiting agonist-induced cAMP production. Does not inhibit ADRB2-signaling. Does not promote MC1R ubiquitination. Also acts as a negative regulator of hedgehog signaling. This Mus musculus (Mouse) protein is E3 ubiquitin-protein ligase MGRN1 (Mgrn1).